Reading from the N-terminus, the 468-residue chain is ATP synthase subunit beta (468 aa).

ATP is bound at residue 155–162 (GGAGVGKT).

Belongs to the ATPase alpha/beta chains family. As to quaternary structure, F-type ATPases have 2 components, CF(1) - the catalytic core - and CF(0) - the membrane proton channel. CF(1) has five subunits: alpha(3), beta(3), gamma(1), delta(1), epsilon(1). CF(0) has three main subunits: a(1), b(2) and c(9-12). The alpha and beta chains form an alternating ring which encloses part of the gamma chain. CF(1) is attached to CF(0) by a central stalk formed by the gamma and epsilon chains, while a peripheral stalk is formed by the delta and b chains.

The protein localises to the cell membrane. It catalyses the reaction ATP + H2O + 4 H(+)(in) = ADP + phosphate + 5 H(+)(out). Functionally, produces ATP from ADP in the presence of a proton gradient across the membrane. The catalytic sites are hosted primarily by the beta subunits. This chain is ATP synthase subunit beta, found in Streptococcus pneumoniae serotype 19F (strain G54).